The primary structure comprises 276 residues: Ribonuclease T2 (276 aa).

Positions Met1–Phe17 are cleaved as a signal peptide. 5 disulfide bridges follow: Cys22–Cys41, Cys30–Cys77, Cys40–Cys143, Cys85–Cys135, and Cys208–Cys242. Asn32 carries N-linked (GlcNAc...) asparagine glycosylation. His70 is an active-site residue. N-linked (GlcNAc...) asparagine glycosylation is present at Asn93. Residues Glu128 and His132 contribute to the active site. N-linked (GlcNAc...) asparagine glycosylation is present at Asn256.

It belongs to the RNase T2 family.

The catalysed reaction is a ribonucleotidyl-ribonucleotide-RNA + H2O = a 3'-end 3'-phospho-ribonucleotide-RNA + a 5'-end dephospho-ribonucleoside-RNA + H(+). The sequence is that of Ribonuclease T2 (rntB) from Aspergillus oryzae (strain ATCC 42149 / RIB 40) (Yellow koji mold).